We begin with the raw amino-acid sequence, 206 residues long: tRNA(Phe) 7-((3-amino-3-carboxypropyl)-4-demethylwyosine(37)-N(4))-methyltransferase 2 (206 aa).

It belongs to the TYW3 family.

It carries out the reaction 4-demethyl-7-[(3S)-3-amino-3-carboxypropyl]wyosine(37) in tRNA(Phe) + S-adenosyl-L-methionine = 7-[(3S)-3-amino-3-carboxypropyl]wyosine(37) in tRNA(Phe) + S-adenosyl-L-homocysteine + H(+). Its function is as follows. S-adenosyl-L-methionine-dependent methyltransferase that acts as a component of the wyosine derivatives biosynthesis pathway. Probably methylates N-4 position of wybutosine-86 to produce wybutosine-72. The sequence is that of tRNA(Phe) 7-((3-amino-3-carboxypropyl)-4-demethylwyosine(37)-N(4))-methyltransferase 2 from Pyrococcus furiosus (strain ATCC 43587 / DSM 3638 / JCM 8422 / Vc1).